The sequence spans 238 residues: Small ribosomal subunit protein uS2c (238 aa).

This sequence belongs to the universal ribosomal protein uS2 family.

It localises to the plastid. It is found in the chloroplast. The polypeptide is Small ribosomal subunit protein uS2c (rps2) (Oltmannsiellopsis viridis (Marine flagellate)).